The chain runs to 448 residues: RuvB-like 2 (448 aa).

73 to 80 (GEPGAGKT) is a binding site for ATP.

This sequence belongs to the RuvB family. In terms of assembly, forms homohexameric rings. May form a dodecamer with ruvb-1 made of two stacked hexameric rings. Expressed in gonadal cells.

The protein resides in the cytoplasm. The protein localises to the nucleus. It catalyses the reaction ATP + H2O = ADP + phosphate + H(+). Possesses single-stranded DNA-stimulated ATPase and ATP-dependent DNA helicase (5' to 3') activity suggesting a role in nuclear processes such as recombination and transcription. May participate in several chromatin remodeling complexes that mediate the ATP-dependent exchange of histones and remodel chromatin by shifting nucleosomes. Involvement in these complexes is likely required for transcriptional activation of selected genes and DNA repair in response to DNA damage. Has a role in gonadal development. Involved in the endoplasmic reticulum (ER)-associated degradation (ERAD) pathway where it negatively regulates expression of ER stress response genes. Specifically, negatively controls the expression of ER homeostasis regulator ckb-2 in a cdc-48.1/2-dependent manner. This chain is RuvB-like 2, found in Caenorhabditis elegans.